The primary structure comprises 457 residues: Peptidyl-prolyl cis-trans isomerase FKBP5 (457 aa).

An N-acetylmethionine modification is found at M1. Over residues 1-11 (MTTDEGAKNNE) the composition is skewed to basic and acidic residues. The tract at residues 1–24 (MTTDEGAKNNEESPTATVAEQGED) is disordered. At S13 the chain carries Phosphoserine. K28 is modified (N6-acetyllysine). The region spanning 42–130 (NGEETPMIGD…KIPSNATLFF (89 aa)) is the PPIase FKBP-type 1 domain. Position 155 is an N6-acetyllysine (K155). One can recognise a PPIase FKBP-type 2 domain in the interval 157-243 (EGYSNPNEGA…GIEPNAELIY (87 aa)). TPR repeat units lie at residues 268–301 (AAIV…LEME), 317–350 (LAAF…DSAN), and 351–384 (EKGL…NPQN). The segment at 420–457 (DAKEEANKAMGKKTSEGVTNEKGTDSQAMEEEKPEGHV) is disordered. A Phosphoserine modification is found at S445.

In terms of assembly, part of a heteromultimeric cytoplasmic complex with HSP90AA1, HSPA1A/HSPA1B and steroid receptors. Upon ligand binding dissociates from the complex and FKBP4 takes its place. Interacts with functionally mature heterooligomeric progesterone receptor complexes along with HSP90 and TEBP. Interacts with NR3C1. Interacts with Akt/AKT1 and PHLPP1; enhancing dephosphorylation and subsequent activation of Akt/AKT1. Interacts with IFI44L; this interaction modulates the kinase activity of IKBKB and IKBKE. Interacts with IKBKB and IKBKE. Post-translationally, acetylation impairs ability to promote interaction between Akt/AKT1 and PHLPP1. Deacetylation by SIRT7 promotes interaction between Akt/AKT1 and PHLPP1, leading to suppress Akt/AKT1 activation. Ubiquitinated, leading to degradation in a proteasome-dependent manner. Deubiquitinated by USP49, leading to stabilization. As to expression, widely expressed, enriched in testis compared to other tissues.

Its subcellular location is the cytoplasm. The protein localises to the nucleus. It catalyses the reaction [protein]-peptidylproline (omega=180) = [protein]-peptidylproline (omega=0). Its activity is regulated as follows. Inhibited by both FK506 and rapamycin. Its function is as follows. Immunophilin protein with PPIase and co-chaperone activities. Component of unligated steroid receptors heterocomplexes through interaction with heat-shock protein 90 (HSP90). Plays a role in the intracellular trafficking of heterooligomeric forms of steroid hormone receptors maintaining the complex into the cytoplasm when unliganded. Acts as a regulator of Akt/AKT1 activity by promoting the interaction between Akt/AKT1 and PHLPP1, thereby enhancing dephosphorylation and subsequent activation of Akt/AKT1. Interacts with IKBKE and IKBKB which facilitates IKK complex assembly leading to increased IKBKE and IKBKB kinase activity, NF-kappa-B activation, and IFN production. The sequence is that of Peptidyl-prolyl cis-trans isomerase FKBP5 (FKBP5) from Homo sapiens (Human).